The sequence spans 736 residues: Phosphoribosylformylglycinamidine synthase subunit PurL (736 aa).

His49 is a catalytic residue. ATP contacts are provided by Tyr52 and Lys91. Glu93 lines the Mg(2+) pocket. Substrate is bound by residues 94-97 (SHNH) and Arg116. His95 (proton acceptor) is an active-site residue. Asp117 serves as a coordination point for Mg(2+). A substrate-binding site is contributed by Gln240. Asp268 serves as a coordination point for Mg(2+). 312–314 (ESQ) lines the substrate pocket. 2 residues coordinate ATP: Asp493 and Gly530. Position 531 (Asn531) interacts with Mg(2+). Ser533 is a binding site for substrate.

The protein belongs to the FGAMS family. In terms of assembly, monomer. Part of the FGAM synthase complex composed of 1 PurL, 1 PurQ and 2 PurS subunits.

The protein localises to the cytoplasm. It catalyses the reaction N(2)-formyl-N(1)-(5-phospho-beta-D-ribosyl)glycinamide + L-glutamine + ATP + H2O = 2-formamido-N(1)-(5-O-phospho-beta-D-ribosyl)acetamidine + L-glutamate + ADP + phosphate + H(+). Its pathway is purine metabolism; IMP biosynthesis via de novo pathway; 5-amino-1-(5-phospho-D-ribosyl)imidazole from N(2)-formyl-N(1)-(5-phospho-D-ribosyl)glycinamide: step 1/2. Functionally, part of the phosphoribosylformylglycinamidine synthase complex involved in the purines biosynthetic pathway. Catalyzes the ATP-dependent conversion of formylglycinamide ribonucleotide (FGAR) and glutamine to yield formylglycinamidine ribonucleotide (FGAM) and glutamate. The FGAM synthase complex is composed of three subunits. PurQ produces an ammonia molecule by converting glutamine to glutamate. PurL transfers the ammonia molecule to FGAR to form FGAM in an ATP-dependent manner. PurS interacts with PurQ and PurL and is thought to assist in the transfer of the ammonia molecule from PurQ to PurL. This Rhodopseudomonas palustris (strain ATCC BAA-98 / CGA009) protein is Phosphoribosylformylglycinamidine synthase subunit PurL.